We begin with the raw amino-acid sequence, 61 residues long: Large ribosomal subunit protein uL30 (61 aa).

It belongs to the universal ribosomal protein uL30 family. Part of the 50S ribosomal subunit.

In Corynebacterium jeikeium (strain K411), this protein is Large ribosomal subunit protein uL30.